The chain runs to 625 residues: Threonine--tRNA ligase (625 aa).

The editing domain stretch occupies residues 1-147; it reads MRMLLIHSDY…TIVPEEAKVE (147 aa). The tract at residues 206-505 is catalytic; that stretch reads PHVRLMLEHE…MQEGKKPMFP (300 aa). 3 residues coordinate Zn(2+): Cys-298, His-350, and His-474.

This sequence belongs to the class-II aminoacyl-tRNA synthetase family. Homodimer. It depends on Zn(2+) as a cofactor.

The protein localises to the cytoplasm. The enzyme catalyses tRNA(Thr) + L-threonine + ATP = L-threonyl-tRNA(Thr) + AMP + diphosphate + H(+). Catalyzes the attachment of threonine to tRNA(Thr) in a two-step reaction: L-threonine is first activated by ATP to form Thr-AMP and then transferred to the acceptor end of tRNA(Thr). Also edits incorrectly charged L-seryl-tRNA(Thr). The sequence is that of Threonine--tRNA ligase from Pyrococcus furiosus (strain ATCC 43587 / DSM 3638 / JCM 8422 / Vc1).